The primary structure comprises 221 residues: UPF0758 protein YicR (221 aa).

In terms of domain architecture, MPN spans 99–221; sequence ALLSPEMTRE…YVSFAERGWI (123 aa). Residues His170, His172, and Asp183 each coordinate Zn(2+). Positions 170 to 183 match the JAMM motif motif; that stretch reads HNHPSGCAEPSKAD.

The protein belongs to the UPF0758 family. YicR subfamily.

In Salmonella paratyphi A (strain ATCC 9150 / SARB42), this protein is UPF0758 protein YicR.